The sequence spans 248 residues: UPF0246 protein lp_0089 (248 aa).

This sequence belongs to the UPF0246 family.

The chain is UPF0246 protein lp_0089 from Lactiplantibacillus plantarum (strain ATCC BAA-793 / NCIMB 8826 / WCFS1) (Lactobacillus plantarum).